The following is a 291-amino-acid chain: ATP synthase subunit a (291 aa).

5 consecutive transmembrane segments (helical) span residues 48 to 68 (IHLDSMGWSIGLGIIFCLVFW), 108 to 128 (IAPLALTIFVWIFLMNLMDLI), 161 to 181 (DPNITLGMSLSVFVLILFYSI), 241 to 261 (LIFILIALLPFWIQWALSVPW), and 262 to 282 (AIFHILVITLQAFIFMMLTIV).

This sequence belongs to the ATPase A chain family. In terms of assembly, F-type ATPases have 2 components, CF(1) - the catalytic core - and CF(0) - the membrane proton channel. CF(1) has five subunits: alpha(3), beta(3), gamma(1), delta(1), epsilon(1). CF(0) has three main subunits: a(1), b(2) and c(9-12). The alpha and beta chains form an alternating ring which encloses part of the gamma chain. CF(1) is attached to CF(0) by a central stalk formed by the gamma and epsilon chains, while a peripheral stalk is formed by the delta and b chains.

Its subcellular location is the cell inner membrane. In terms of biological role, key component of the proton channel; it plays a direct role in the translocation of protons across the membrane. The protein is ATP synthase subunit a of Acinetobacter baylyi (strain ATCC 33305 / BD413 / ADP1).